The primary structure comprises 227 residues: Agamous-like MADS-box protein AGL8 homolog (227 aa).

Residues R3–Y57 enclose the MADS-box domain. The K-box domain maps to P88–S178.

As to expression, flower specific.

The protein resides in the nucleus. Its function is as follows. Probable transcription factor. The chain is Agamous-like MADS-box protein AGL8 homolog (TDR4) from Solanum lycopersicum (Tomato).